A 149-amino-acid polypeptide reads, in one-letter code: Large ribosomal subunit protein uL13 (149 aa).

It belongs to the universal ribosomal protein uL13 family. In terms of assembly, part of the 50S ribosomal subunit.

In terms of biological role, this protein is one of the early assembly proteins of the 50S ribosomal subunit, although it is not seen to bind rRNA by itself. It is important during the early stages of 50S assembly. This is Large ribosomal subunit protein uL13 from Prosthecochloris aestuarii (strain DSM 271 / SK 413).